A 337-amino-acid chain; its full sequence is GTP 3',8-cyclase (337 aa).

The 226-residue stretch at 1 to 226 folds into the Radical SAM core domain; that stretch reads MNRVDYLRIS…REKIRQKWGL (226 aa). Arginine 8 contacts GTP. Residues cysteine 15 and cysteine 19 each contribute to the [4Fe-4S] cluster site. Tyrosine 21 contributes to the S-adenosyl-L-methionine binding site. Cysteine 22 is a [4Fe-4S] cluster binding site. Arginine 60 provides a ligand contact to GTP. S-adenosyl-L-methionine is bound at residue glycine 64. Threonine 91 is a GTP binding site. Serine 115 is an S-adenosyl-L-methionine binding site. Lysine 155 contacts GTP. Methionine 189 provides a ligand contact to S-adenosyl-L-methionine. Residues cysteine 260 and cysteine 263 each contribute to the [4Fe-4S] cluster site. 265 to 267 contacts GTP; sequence RMR. A [4Fe-4S] cluster-binding site is contributed by cysteine 277.

The protein belongs to the radical SAM superfamily. MoaA family. As to quaternary structure, monomer and homodimer. The cofactor is [4Fe-4S] cluster.

The catalysed reaction is GTP + AH2 + S-adenosyl-L-methionine = (8S)-3',8-cyclo-7,8-dihydroguanosine 5'-triphosphate + 5'-deoxyadenosine + L-methionine + A + H(+). Its pathway is cofactor biosynthesis; molybdopterin biosynthesis. Functionally, catalyzes the cyclization of GTP to (8S)-3',8-cyclo-7,8-dihydroguanosine 5'-triphosphate. The chain is GTP 3',8-cyclase from Crocosphaera subtropica (strain ATCC 51142 / BH68) (Cyanothece sp. (strain ATCC 51142)).